Consider the following 422-residue polypeptide: Inhibitor of growth protein 1 (422 aa).

The segment at 261–349 (ELGDTAGNSG…EASPADLPID (89 aa)) is disordered. Lys-278 participates in a covalent cross-link: Glycyl lysine isopeptide (Lys-Gly) (interchain with G-Cter in SUMO2). Positions 297-314 (RNNENRENASSNHDHDDG) are enriched in basic and acidic residues. Over residues 322-334 (KKAKTSKKKKRSK) the composition is skewed to basic residues. The PHD-type zinc-finger motif lies at 353-402 (PTYCLCNQVSYGEMIGCDNDECPIEWFHFSCVGLNHKPKGKWYCPKCRGE). Positions 356, 358, 369, 374, 380, 383, 396, and 399 each coordinate Zn(2+). A PBR region spans residues 405–422 (KTMDKALEKSKKERAYNR).

The protein belongs to the ING family. Interacts with H3K4me3 and to a lesser extent with H3K4me2. Interacts with TP53. Isoform 2 interacts with RSL1D1. As to expression, isoform 2 was expressed in all normal tissues and cells examined, as well as in all breast cancer and melanoma cell lines examined. Isoform 3 was expressed in testis, liver, and kidney, weakly expressed in colon and brain and not expressed in breast and cultured melanocytes. Isoform 4 was highly expressed in testis and weakly expressed in brain, but not expressed in breast, colon, kidney, melanocytes, breast cancer or melanoma cell lines.

The protein localises to the nucleus. Its function is as follows. Cooperates with p53/TP53 in the negative regulatory pathway of cell growth by modulating p53-dependent transcriptional activation. Implicated as a tumor suppressor gene. This Homo sapiens (Human) protein is Inhibitor of growth protein 1 (ING1).